A 282-amino-acid chain; its full sequence is Elongation factor Ts (282 aa).

The tract at residues 80 to 83 is involved in Mg(2+) ion dislocation from EF-Tu; that stretch reads TDFV.

This sequence belongs to the EF-Ts family.

It is found in the cytoplasm. Associates with the EF-Tu.GDP complex and induces the exchange of GDP to GTP. It remains bound to the aminoacyl-tRNA.EF-Tu.GTP complex up to the GTP hydrolysis stage on the ribosome. The chain is Elongation factor Ts (tsf) from Pasteurella multocida (strain Pm70).